The sequence spans 350 residues: Dihydroorotase (350 aa).

Zn(2+) is bound by residues His-17 and His-19. Substrate is bound by residues 19–21 (HLR) and Asn-45. Residues Lys-103, His-140, and His-178 each contribute to the Zn(2+) site. Lys-103 is subject to N6-carboxylysine. His-140 contacts substrate. Leu-224 contacts substrate. Asp-252 contacts Zn(2+). The active site involves Asp-252. 2 residues coordinate substrate: His-256 and Ala-268.

Belongs to the metallo-dependent hydrolases superfamily. DHOase family. Class II DHOase subfamily. In terms of assembly, homodimer. Zn(2+) is required as a cofactor.

It catalyses the reaction (S)-dihydroorotate + H2O = N-carbamoyl-L-aspartate + H(+). It participates in pyrimidine metabolism; UMP biosynthesis via de novo pathway; (S)-dihydroorotate from bicarbonate: step 3/3. Its function is as follows. Catalyzes the reversible cyclization of carbamoyl aspartate to dihydroorotate. The protein is Dihydroorotase of Buchnera aphidicola subsp. Acyrthosiphon pisum (strain 5A).